Consider the following 227-residue polypeptide: Ribosomal RNA large subunit methyltransferase E (227 aa).

Positions 78, 80, 103, 119, and 143 each coordinate S-adenosyl-L-methionine. The Proton acceptor role is filled by K183.

Belongs to the class I-like SAM-binding methyltransferase superfamily. RNA methyltransferase RlmE family.

It localises to the cytoplasm. The enzyme catalyses uridine(2552) in 23S rRNA + S-adenosyl-L-methionine = 2'-O-methyluridine(2552) in 23S rRNA + S-adenosyl-L-homocysteine + H(+). Specifically methylates the uridine in position 2552 of 23S rRNA at the 2'-O position of the ribose in the fully assembled 50S ribosomal subunit. In Rickettsia akari (strain Hartford), this protein is Ribosomal RNA large subunit methyltransferase E.